The chain runs to 141 residues: Large ribosomal subunit protein uL11c (141 aa).

It belongs to the universal ribosomal protein uL11 family. As to quaternary structure, part of the ribosomal stalk of the 50S ribosomal subunit. Interacts with L10 and the large rRNA to form the base of the stalk. L10 forms an elongated spine to which L12 dimers bind in a sequential fashion forming a multimeric L10(L12)X complex.

Its subcellular location is the plastid. It localises to the chloroplast. Forms part of the ribosomal stalk which helps the ribosome interact with GTP-bound translation factors. In Thalassiosira pseudonana (Marine diatom), this protein is Large ribosomal subunit protein uL11c.